The primary structure comprises 230 residues: N-(5'-phosphoribosyl)anthranilate isomerase (230 aa).

The protein belongs to the TrpF family.

The enzyme catalyses N-(5-phospho-beta-D-ribosyl)anthranilate = 1-(2-carboxyphenylamino)-1-deoxy-D-ribulose 5-phosphate. It participates in amino-acid biosynthesis; L-tryptophan biosynthesis; L-tryptophan from chorismate: step 3/5. This Ralstonia nicotianae (strain ATCC BAA-1114 / GMI1000) (Ralstonia solanacearum) protein is N-(5'-phosphoribosyl)anthranilate isomerase.